A 162-amino-acid chain; its full sequence is Cytochrome c-type biogenesis protein CcmE (162 aa).

Residues 1–8 (MNPRRKKR) lie on the Cytoplasmic side of the membrane. The chain crosses the membrane as a helical; Signal-anchor for type II membrane protein span at residues 9–29 (LTLAVALIGGVAAITSLLLYA). At 30–162 (LNSNLNLFYT…YSQQKAPDTK (133 aa)) the chain is on the periplasmic side. Residues histidine 131 and tyrosine 135 each contribute to the heme site. The interval 142–162 (EAMGQKHEKLDYSQQKAPDTK) is disordered. Residues 153–162 (YSQQKAPDTK) show a composition bias toward polar residues.

It belongs to the CcmE/CycJ family.

The protein localises to the cell inner membrane. Functionally, heme chaperone required for the biogenesis of c-type cytochromes. Transiently binds heme delivered by CcmC and transfers the heme to apo-cytochromes in a process facilitated by CcmF and CcmH. This Shewanella baltica (strain OS223) protein is Cytochrome c-type biogenesis protein CcmE.